A 59-amino-acid polypeptide reads, in one-letter code: Large ribosomal subunit protein uL30 (59 aa).

The protein belongs to the universal ribosomal protein uL30 family. Part of the 50S ribosomal subunit.

This chain is Large ribosomal subunit protein uL30, found in Shewanella amazonensis (strain ATCC BAA-1098 / SB2B).